The sequence spans 278 residues: Gamma carbonic anhydrase 2, mitochondrial (278 aa).

The N-terminal 43 residues, 1–43, are a transit peptide targeting the mitochondrion; that stretch reads MGTLGRAIYTVGNWIRGTGQALDRVGSLLQGSHRIEEHLSRHR. Residues 86 to 88 and 101 to 102 each bind substrate; these read RGD and QD. Residues His107, His130, and His135 each coordinate Zn(2+). Asn209 contributes to the substrate binding site.

The protein belongs to the gamma-class carbonic anhydrase family. In terms of assembly, homotrimer. Component of the mitochondrial oxidoreductase respiratory chain complex I; element of the extra matrix-exposed domain, which is attached to the membrane arm of this complex. Interacts with GAMMACAL1 and GAMMACAL2. Zn(2+) serves as cofactor. In terms of tissue distribution, constitutively expressed in roots and leaves, with higher levels in flowers, particularly in tapetal tissue of anthers, inflorescence (IM) and floral meristems (FM).

It is found in the mitochondrion membrane. In terms of biological role, enzyme involved in the catabolism of H(2)CO(3) but that does not mediates the reversible hydration of carbon dioxide. Mediates complex I assembly in mitochondria and respiration. Binds HCO(3)-. Required for male fertility during anther development and dehiscence to regulate the secondary thickenings of the endothecial cell wall, probably by modulating H(2)O(2)-dependent lignin polymerization. The protein is Gamma carbonic anhydrase 2, mitochondrial (GAMMACA2) of Arabidopsis thaliana (Mouse-ear cress).